The primary structure comprises 144 residues: Large ribosomal subunit protein uL15 (144 aa).

The disordered stretch occupies residues 1-57; sequence MKLNDLSPAPGSRREKHRPGRGIGSGLGKTGGRGHKGQTSRSGGSIAPGFEGGQQPL. A compositionally biased stretch (gly residues) spans 21–31; sequence RGIGSGLGKTG.

The protein belongs to the universal ribosomal protein uL15 family. Part of the 50S ribosomal subunit.

Binds to the 23S rRNA. The polypeptide is Large ribosomal subunit protein uL15 (Pseudomonas entomophila (strain L48)).